A 137-amino-acid chain; its full sequence is Putative transcription elongation factor S-II-like protein 055R (137 aa).

A TFIIS-type zinc finger spans residues 85 to 136 (DFITCPYEVSEGVLRCGKCDCTKILWFSKQTRSMDEPTTIFASCSNCKTRWT). Positions 89, 103, 128, and 131 each coordinate Zn(2+).

Belongs to the IIV-6 349L family.

The protein is Putative transcription elongation factor S-II-like protein 055R of Aedes vexans (Inland floodwater mosquito).